Here is a 210-residue protein sequence, read N- to C-terminus: Prolactin-2 (210 aa).

The signal sequence occupies residues 1 to 23 (MARRSQGTKLHLAVLCLVVSCHA). Cystine bridges form between cysteine 69–cysteine 183 and cysteine 200–cysteine 210.

This sequence belongs to the somatotropin/prolactin family.

Its subcellular location is the secreted. In Oncorhynchus tshawytscha (Chinook salmon), this protein is Prolactin-2 (prl2).